Here is a 1387-residue protein sequence, read N- to C-terminus: DNA-directed RNA polymerase subunit beta'' (1387 aa).

The Zn(2+) site is built by Cys224, Cys295, Cys302, and Cys305. The disordered stretch occupies residues 883-903; sequence SHTGKRNDPAGSGLIPDNGSD.

This sequence belongs to the RNA polymerase beta' chain family. RpoC2 subfamily. As to quaternary structure, in plastids the minimal PEP RNA polymerase catalytic core is composed of four subunits: alpha, beta, beta', and beta''. When a (nuclear-encoded) sigma factor is associated with the core the holoenzyme is formed, which can initiate transcription. Zn(2+) is required as a cofactor.

It is found in the plastid. The protein localises to the chloroplast. The catalysed reaction is RNA(n) + a ribonucleoside 5'-triphosphate = RNA(n+1) + diphosphate. Functionally, DNA-dependent RNA polymerase catalyzes the transcription of DNA into RNA using the four ribonucleoside triphosphates as substrates. This is DNA-directed RNA polymerase subunit beta'' from Platanus occidentalis (Sycamore).